A 355-amino-acid chain; its full sequence is MFDRLESVAQKFRKLEEDLSNPELLANQKEYQKIAREHAEIAPIVEAYGLYKGLHRQLLDNQQLLEQETDPEMRELFRQEIAELKRQIEDTENGLKLMLAPRDPNDDKNVILEIRAGTGGEEAALFVSDLFRMYTRYAELRRWKVEILDSHQTGIGGLKEVIAAVNGQGAYSRLKFERGVHRVQRVPVTESQGRIHTSAVTVAVLPEAEEVDVYIDPNDLRVDVFRSSGPGGQSVNTTDSAVRVTHIPSGLVVICQDEKSQHKNKAKALKVLRARLLDQMQSEQEARIARDRKSQVGTGDRSERIRTYNFPQNRVSDHRINLTLYKLDIILGGALDEIIDPLSTHFQAEALRREE.

Gln-233 is subject to N5-methylglutamine.

Belongs to the prokaryotic/mitochondrial release factor family. Methylated by PrmC. Methylation increases the termination efficiency of RF1.

It localises to the cytoplasm. Peptide chain release factor 1 directs the termination of translation in response to the peptide chain termination codons UAG and UAA. The protein is Peptide chain release factor 1 of Syntrophobacter fumaroxidans (strain DSM 10017 / MPOB).